The following is a 150-amino-acid chain: Globin-2 (150 aa).

A Globin domain is found at 11 to 150 (PLSDAEKNKI…MICILLSSAY (140 aa)). Heme b-binding residues include His-74 and His-106.

The protein belongs to the globin family. As to quaternary structure, monomer.

This chain is Globin-2, found in Mordacia mordax (Southern hemisphere lamprey).